Here is a 336-residue protein sequence, read N- to C-terminus: Biotin synthase (336 aa).

Positions 57–286 (HHGKSIDLCS…RAIVRTAGGR (230 aa)) constitute a Radical SAM core domain. [4Fe-4S] cluster contacts are provided by Cys-75, Cys-79, and Cys-82. Residues Ser-119, Cys-151, Cys-211, and Arg-281 each contribute to the [2Fe-2S] cluster site.

The protein belongs to the radical SAM superfamily. Biotin synthase family. In terms of assembly, homodimer. [4Fe-4S] cluster serves as cofactor. The cofactor is [2Fe-2S] cluster.

It carries out the reaction (4R,5S)-dethiobiotin + (sulfur carrier)-SH + 2 reduced [2Fe-2S]-[ferredoxin] + 2 S-adenosyl-L-methionine = (sulfur carrier)-H + biotin + 2 5'-deoxyadenosine + 2 L-methionine + 2 oxidized [2Fe-2S]-[ferredoxin]. Its pathway is cofactor biosynthesis; biotin biosynthesis; biotin from 7,8-diaminononanoate: step 2/2. In terms of biological role, catalyzes the conversion of dethiobiotin (DTB) to biotin by the insertion of a sulfur atom into dethiobiotin via a radical-based mechanism. This chain is Biotin synthase, found in Desulfotalea psychrophila (strain LSv54 / DSM 12343).